The chain runs to 625 residues: Probable potassium transport system protein Kup 2 (625 aa).

A run of 12 helical transmembrane segments spans residues 15–35 (LSFAALGVVFGDIGTSPLYAF), 52–72 (ILSLIFWSLIIIVSIKYLVIV), 98–118 (GGWLLFITLVGIGLIIGDGML), 134–154 (LSPNLAKYVLPVTLIILFFLF), 164–184 (IGVYFAPVMLVWFITIGILGF), 212–232 (LALFILGGVFLVMTGGEALFA), 246–266 (WFAVALPALLLCYFGQGALVL), 284–304 (FLPVMIILATLATIIASQAII), 336–356 (VYLPLINFILALGTCSLVVIF), 365–385 (AYGIAVNLDMLITTVLVGIIA), 394–414 (FKILIFLLILIIELAFFAGNI), and 417–437 (LLTGGWIPILIAFLGFVVMYT).

The protein belongs to the HAK/KUP transporter (TC 2.A.72) family.

The protein localises to the cell inner membrane. It catalyses the reaction K(+)(in) + H(+)(in) = K(+)(out) + H(+)(out). Functionally, transport of potassium into the cell. Likely operates as a K(+):H(+) symporter. This is Probable potassium transport system protein Kup 2 from Legionella pneumophila (strain Corby).